The following is a 354-amino-acid chain: tRNA N6-adenosine threonylcarbamoyltransferase (354 aa).

Fe cation contacts are provided by His116 and His120. Substrate is bound by residues 139–143 (LVSGG), Asp172, Gly185, and Asn281. Residue Asp309 coordinates Fe cation.

The protein belongs to the KAE1 / TsaD family. Fe(2+) serves as cofactor.

The protein resides in the cytoplasm. The catalysed reaction is L-threonylcarbamoyladenylate + adenosine(37) in tRNA = N(6)-L-threonylcarbamoyladenosine(37) in tRNA + AMP + H(+). In terms of biological role, required for the formation of a threonylcarbamoyl group on adenosine at position 37 (t(6)A37) in tRNAs that read codons beginning with adenine. Is involved in the transfer of the threonylcarbamoyl moiety of threonylcarbamoyl-AMP (TC-AMP) to the N6 group of A37, together with TsaE and TsaB. TsaD likely plays a direct catalytic role in this reaction. The chain is tRNA N6-adenosine threonylcarbamoyltransferase from Parasynechococcus marenigrum (strain WH8102).